The sequence spans 93 residues: MSINELESEQKDWALSMLCRSGVLSPCRHHEGVYVDEGIDIESAYKYSMKVYKSNEDKSPFCNVREMTDTVQNYYHEYGGNDTCPLCTKHIDD.

This is Protein ea8.5 (ea8.5) from Escherichia phage lambda (Bacteriophage lambda).